A 338-amino-acid chain; its full sequence is Glycerol-3-phosphate dehydrogenase [NAD(P)+] (338 aa).

NADPH is bound by residues Ser-13, Trp-14, and Lys-108. The sn-glycerol 3-phosphate site is built by Lys-108, Gly-139, and Ser-141. Ala-143 serves as a coordination point for NADPH. Lys-194, Asp-247, Ser-257, Arg-258, and Asn-259 together coordinate sn-glycerol 3-phosphate. The Proton acceptor role is filled by Lys-194. NADPH is bound at residue Arg-258. 2 residues coordinate NADPH: Val-282 and Glu-284.

This sequence belongs to the NAD-dependent glycerol-3-phosphate dehydrogenase family.

The protein localises to the cytoplasm. The catalysed reaction is sn-glycerol 3-phosphate + NAD(+) = dihydroxyacetone phosphate + NADH + H(+). It carries out the reaction sn-glycerol 3-phosphate + NADP(+) = dihydroxyacetone phosphate + NADPH + H(+). Its pathway is membrane lipid metabolism; glycerophospholipid metabolism. Its function is as follows. Catalyzes the reduction of the glycolytic intermediate dihydroxyacetone phosphate (DHAP) to sn-glycerol 3-phosphate (G3P), the key precursor for phospholipid synthesis. In Streptococcus pyogenes serotype M2 (strain MGAS10270), this protein is Glycerol-3-phosphate dehydrogenase [NAD(P)+].